The following is a 205-amino-acid chain: Thymidylate kinase (205 aa).

7–14 (GIDGSGKT) is an ATP binding site.

This sequence belongs to the thymidylate kinase family.

It catalyses the reaction dTMP + ATP = dTDP + ADP. In terms of biological role, phosphorylation of dTMP to form dTDP in both de novo and salvage pathways of dTTP synthesis. The sequence is that of Thymidylate kinase from Wolbachia pipientis subsp. Culex pipiens (strain wPip).